Consider the following 182-residue polypeptide: R-phycoerythrin subunit beta (182 aa).

C82 serves as a coordination point for (2R,3E)-phycoerythrobilin.

Belongs to the phycobiliprotein family. In terms of assembly, homodimer. Post-translationally, contains one covalently linked phycoerythrobilin chromophore.

In terms of biological role, green-light absorbing phycoerythrin of unknown function. The polypeptide is R-phycoerythrin subunit beta (cpeB) (Prochlorococcus marinus (strain SARG / CCMP1375 / SS120)).